The primary structure comprises 239 residues: DNA repair protein RecO (239 aa).

It belongs to the RecO family.

In terms of biological role, involved in DNA repair and RecF pathway recombination. The polypeptide is DNA repair protein RecO (Tolumonas auensis (strain DSM 9187 / NBRC 110442 / TA 4)).